The primary structure comprises 860 residues: Leucine--tRNA ligase (860 aa).

Positions 42–52 match the 'HIGH' region motif; sequence PYPSGRLHMGH. A 'KMSKS' region motif is present at residues 619–623; sequence KMSKS. Lys-622 lines the ATP pocket.

It belongs to the class-I aminoacyl-tRNA synthetase family.

It localises to the cytoplasm. It carries out the reaction tRNA(Leu) + L-leucine + ATP = L-leucyl-tRNA(Leu) + AMP + diphosphate. In Yersinia pseudotuberculosis serotype I (strain IP32953), this protein is Leucine--tRNA ligase.